A 932-amino-acid polypeptide reads, in one-letter code: Alanine--tRNA ligase, mitochondrial (932 aa).

Positions 458–480 (SRLTWNTSSSSSDQTTQQTTQLP) are disordered. Residues 464-478 (TSSSSSDQTTQQTTQ) show a composition bias toward low complexity. Zn(2+) is bound by residues His610, His614, Cys713, and His717.

Belongs to the class-II aminoacyl-tRNA synthetase family. Monomer. Requires Zn(2+) as cofactor.

It localises to the mitochondrion. The catalysed reaction is tRNA(Ala) + L-alanine + ATP = L-alanyl-tRNA(Ala) + AMP + diphosphate. Its function is as follows. Catalyzes the attachment of alanine to tRNA(Ala) in a two-step reaction: alanine is first activated by ATP to form Ala-AMP and then transferred to the acceptor end of tRNA(Ala). Also edits incorrectly charged tRNA(Ala) via its editing domain. The polypeptide is Alanine--tRNA ligase, mitochondrial (malaS) (Dictyostelium discoideum (Social amoeba)).